Reading from the N-terminus, the 350-residue chain is Ribosomal RNA large subunit methyltransferase Cfr (350 aa).

Residue glutamate 92 is the Proton acceptor of the active site. The 235-residue stretch at 99-333 (EAGWESFCIS…VTIRSQFGRE (235 aa)) folds into the Radical SAM core domain. Cysteine 106 and cysteine 338 are disulfide-bonded. Residues cysteine 113, cysteine 117, and cysteine 120 each contribute to the [4Fe-4S] cluster site. S-adenosyl-L-methionine contacts are provided by residues 159-160 (GE), serine 190, 213-215 (SLH), and asparagine 293. Cysteine 338 (S-methylcysteine intermediate) is an active-site residue.

It belongs to the radical SAM superfamily. RlmN family. Cfr subfamily. [4Fe-4S] cluster serves as cofactor.

The protein resides in the cytoplasm. It catalyses the reaction adenosine(2503) in 23S rRNA + 2 reduced [2Fe-2S]-[ferredoxin] + 2 S-adenosyl-L-methionine = 8-methyladenosine(2503) in 23S rRNA + 5'-deoxyadenosine + L-methionine + 2 oxidized [2Fe-2S]-[ferredoxin] + S-adenosyl-L-homocysteine. Functionally, specifically methylates position 8 of adenine 2503 in 23S rRNA. Confers resistance to some classes of antibiotics. The chain is Ribosomal RNA large subunit methyltransferase Cfr from Shouchella clausii (strain KSM-K16) (Alkalihalobacillus clausii).